The primary structure comprises 74 residues: Protein translocase subunit SecE (74 aa).

The Cytoplasmic portion of the chain corresponds to 1–36 (MKTDFNQKIEQLKEFIEECRRVWLVLKKPTKDEYLA). The chain crosses the membrane as a helical span at residues 37-62 (VAKVTALGISLLGIIGYIIHVPATYI). At 63 to 74 (KGILKPPTTPRV) the chain is on the extracellular side.

This sequence belongs to the SecE/SEC61-gamma family. In terms of assembly, component of the Sec protein translocase complex. Heterotrimer consisting of alpha (SecY), beta (SecG) and gamma (SecE) subunits. The heterotrimers can form oligomers, although 1 heterotrimer is thought to be able to translocate proteins. Interacts with the ribosome. May interact with SecDF, and other proteins may be involved.

It is found in the cell membrane. Its function is as follows. Essential subunit of the protein translocation channel SecYEG. Clamps together the 2 halves of SecY. May contact the channel plug during translocation. The chain is Protein translocase subunit SecE from Methanocaldococcus jannaschii (strain ATCC 43067 / DSM 2661 / JAL-1 / JCM 10045 / NBRC 100440) (Methanococcus jannaschii).